Here is a 154-residue protein sequence, read N- to C-terminus: Endoribonuclease YbeY (154 aa).

The Zn(2+) site is built by H113, H117, and H123.

This sequence belongs to the endoribonuclease YbeY family. Zn(2+) serves as cofactor.

It is found in the cytoplasm. Functionally, single strand-specific metallo-endoribonuclease involved in late-stage 70S ribosome quality control and in maturation of the 3' terminus of the 16S rRNA. The chain is Endoribonuclease YbeY from Verminephrobacter eiseniae (strain EF01-2).